The primary structure comprises 222 residues: Protein ORM1 (222 aa).

Positions 1 to 57 (MTELDYQGTAEAASTSYSRNQTDLKPFPSAGSASSSIKTTEPVKDHRRRRSSSIISH) are disordered. Residues 1–85 (MTELDYQGTA…NATWVDQRGA (85 aa)) lie on the Cytoplasmic side of the membrane. The segment covering 12–23 (AASTSYSRNQTD) has biased composition (polar residues). A phosphoserine mark is found at S29, S32, and S56. Residues 86 to 106 (WIIHVVIIILLKLFYNLFPGV) form a helical membrane-spanning segment. At 107–109 (TTE) the chain is on the extracellular side. Residues 110 to 130 (WSWTLTNMTYVIGSYVMFHLI) traverse the membrane as a helical segment. At 131-162 (KGTPFDFNGGAYDNLTMWEQIDDETLYTPSRK) the chain is on the cytoplasmic side. A helical membrane pass occupies residues 163–183 (FLISVPIALFLVSTHYAHYDL). K184 is a topological domain (extracellular). Residues 185–205 (LFSWNCFLTTFGAVVPKLPVT) traverse the membrane as a helical segment. The Cytoplasmic portion of the chain corresponds to 206–222 (HRLRISIPGITGRAQIS).

It belongs to the ORM family. In terms of assembly, component of the SPOTS complex, at least composed of LCB1/2 (LCB1 and/or LCB2), ORM1/2 (ORM1 and/or ORM2), SAC1 and TSC3. Phosphorylated in case of disruption of sphingolipid synthesis. Phosphorylation regulates inhibitory activity of serine palmitoyltransferases (LCB1 and LCB2).

The protein localises to the endoplasmic reticulum membrane. Component of the SPOTS complex that acts as a negative regulator of sphingolipid synthesis. Acts by inhibiting serine palmitoyltransferases (LCB1 and LCB2) activity. Along with ORM2, plays a role in the phosphorylation of LAC1 and YPK1, the distribution of actin patches between mother and daughter cells, and in endocytosis. Disruption or inhibition of sphingolipid synthesis leads to the activation and phosphorylation of YPK1 through the TORC2 and PKH1 pathways, which in turn phosphorylates ORM1 and LAG1 to activate sphingolipid synthesis. This chain is Protein ORM1 (ORM1), found in Saccharomyces cerevisiae (strain ATCC 204508 / S288c) (Baker's yeast).